A 125-amino-acid polypeptide reads, in one-letter code: Holo-[acyl-carrier-protein] synthase (125 aa).

The Mg(2+) site is built by D6 and E55.

Belongs to the P-Pant transferase superfamily. AcpS family. Mg(2+) serves as cofactor.

Its subcellular location is the cytoplasm. It carries out the reaction apo-[ACP] + CoA = holo-[ACP] + adenosine 3',5'-bisphosphate + H(+). Transfers the 4'-phosphopantetheine moiety from coenzyme A to a Ser of acyl-carrier-protein. This Chlorobium phaeovibrioides (strain DSM 265 / 1930) (Prosthecochloris vibrioformis (strain DSM 265)) protein is Holo-[acyl-carrier-protein] synthase.